Consider the following 227-residue polypeptide: Ribosomal RNA small subunit methyltransferase G (227 aa).

S-adenosyl-L-methionine contacts are provided by residues Gly74, Leu79, 124-125 (AE), and Arg142.

This sequence belongs to the methyltransferase superfamily. RNA methyltransferase RsmG family.

It is found in the cytoplasm. In terms of biological role, specifically methylates the N7 position of guanine in position 518 of 16S rRNA. The sequence is that of Ribosomal RNA small subunit methyltransferase G from Mycolicibacterium gilvum (strain PYR-GCK) (Mycobacterium gilvum (strain PYR-GCK)).